The primary structure comprises 309 residues: HPr kinase/phosphorylase (309 aa).

Catalysis depends on residues histidine 138 and lysine 159. Glycine 153–serine 160 lines the ATP pocket. Mg(2+) is bound at residue serine 160. Aspartate 177 serves as the catalytic Proton acceptor; for phosphorylation activity. Proton donor; for dephosphorylation activity. Residues leucine 201–asparagine 210 are important for the catalytic mechanism of both phosphorylation and dephosphorylation. Glutamate 202 contacts Mg(2+). Arginine 243 is an active-site residue. Positions proline 264 to arginine 269 are important for the catalytic mechanism of dephosphorylation.

The protein belongs to the HPrK/P family. In terms of assembly, homohexamer. Mg(2+) serves as cofactor.

The catalysed reaction is [HPr protein]-L-serine + ATP = [HPr protein]-O-phospho-L-serine + ADP + H(+). The enzyme catalyses [HPr protein]-O-phospho-L-serine + phosphate + H(+) = [HPr protein]-L-serine + diphosphate. Its function is as follows. Catalyzes the ATP- as well as the pyrophosphate-dependent phosphorylation of a specific serine residue in HPr, a phosphocarrier protein of the phosphoenolpyruvate-dependent sugar phosphotransferase system (PTS). HprK/P also catalyzes the pyrophosphate-producing, inorganic phosphate-dependent dephosphorylation (phosphorolysis) of seryl-phosphorylated HPr (P-Ser-HPr). The two antagonistic activities of HprK/P are regulated by several intracellular metabolites, which change their concentration in response to the absence or presence of rapidly metabolisable carbon sources (glucose, fructose, etc.) in the growth medium. Also phosphorylates/dephosphorylates the HPr-like catabolite repression protein crh on a specific serine residue. Therefore, by controlling the phosphorylation state of HPr and crh, HPrK/P is a sensor enzyme that plays a major role in the regulation of carbon metabolism and sugar transport: it mediates carbon catabolite repression (CCR), and regulates PTS-catalyzed carbohydrate uptake and inducer exclusion. In Geobacillus thermodenitrificans (strain NG80-2), this protein is HPr kinase/phosphorylase.